A 97-amino-acid polypeptide reads, in one-letter code: YcgL domain-containing protein Pfl01_1389 (97 aa).

In terms of domain architecture, YcgL spans 3-87 (RICSIYQSSK…AEEEYIEHLP (85 aa)).

In Pseudomonas fluorescens (strain Pf0-1), this protein is YcgL domain-containing protein Pfl01_1389.